The chain runs to 427 residues: Glutamate-1-semialdehyde 2,1-aminomutase (427 aa).

An N6-(pyridoxal phosphate)lysine modification is found at Lys-265.

Belongs to the class-III pyridoxal-phosphate-dependent aminotransferase family. HemL subfamily. Homodimer. Pyridoxal 5'-phosphate serves as cofactor.

It localises to the cytoplasm. The enzyme catalyses (S)-4-amino-5-oxopentanoate = 5-aminolevulinate. It participates in porphyrin-containing compound metabolism; protoporphyrin-IX biosynthesis; 5-aminolevulinate from L-glutamyl-tRNA(Glu): step 2/2. This chain is Glutamate-1-semialdehyde 2,1-aminomutase, found in Burkholderia cenocepacia (strain ATCC BAA-245 / DSM 16553 / LMG 16656 / NCTC 13227 / J2315 / CF5610) (Burkholderia cepacia (strain J2315)).